The primary structure comprises 430 residues: Histidine--tRNA ligase, chloroplastic (430 aa).

This sequence belongs to the class-II aminoacyl-tRNA synthetase family.

Its subcellular location is the plastid. The protein resides in the chloroplast. It carries out the reaction tRNA(His) + L-histidine + ATP = L-histidyl-tRNA(His) + AMP + diphosphate + H(+). The protein is Histidine--tRNA ligase, chloroplastic of Pyropia yezoensis (Susabi-nori).